A 186-amino-acid chain; its full sequence is Elongation factor P (186 aa).

This sequence belongs to the elongation factor P family.

Its subcellular location is the cytoplasm. It functions in the pathway protein biosynthesis; polypeptide chain elongation. In terms of biological role, involved in peptide bond synthesis. Stimulates efficient translation and peptide-bond synthesis on native or reconstituted 70S ribosomes in vitro. Probably functions indirectly by altering the affinity of the ribosome for aminoacyl-tRNA, thus increasing their reactivity as acceptors for peptidyl transferase. The protein is Elongation factor P of Prochlorococcus marinus (strain SARG / CCMP1375 / SS120).